The following is a 238-amino-acid chain: Dolichyldiphosphatase 1 (238 aa).

The next 4 helical transmembrane spans lie at 33–53 (LAYL…LIIF), 100–120 (PSSH…FLYL), 130–150 (FLDL…AFLV), and 162–182 (WSQV…WFAF).

The protein belongs to the dolichyldiphosphatase family.

The protein resides in the endoplasmic reticulum membrane. It carries out the reaction a di-trans,poly-cis-dolichyl diphosphate + H2O = a di-trans,poly-cis-dolichyl phosphate + phosphate + H(+). It functions in the pathway protein modification; protein glycosylation. In terms of biological role, required for efficient N-glycosylation. Necessary for maintaining optimal levels of dolichol-linked oligosaccharides. Hydrolyzes dolichyl pyrophosphate at a very high rate and dolichyl monophosphate at a much lower rate. Does not act on phosphatidate. In Rhinolophus ferrumequinum (Greater horseshoe bat), this protein is Dolichyldiphosphatase 1 (DOLPP1).